Consider the following 861-residue polypeptide: Leucine--tRNA ligase (861 aa).

Positions 42–52 match the 'HIGH' region motif; sequence PYPSGKLHMGH. Residues 620 to 624 carry the 'KMSKS' region motif; that stretch reads KMSKS. An ATP-binding site is contributed by Lys-623.

This sequence belongs to the class-I aminoacyl-tRNA synthetase family.

It is found in the cytoplasm. It carries out the reaction tRNA(Leu) + L-leucine + ATP = L-leucyl-tRNA(Leu) + AMP + diphosphate. This Buchnera aphidicola subsp. Schizaphis graminum (strain Sg) protein is Leucine--tRNA ligase.